A 60-amino-acid chain; its full sequence is Snake venom metalloproteinase bothrojaractivase (60 aa).

Positions 1-60 (RYIELAVVADHGMFTKYRVHELVNTVNGFFRSKQDLIKVQKDKTLTSFGEWRERDLLPRI) constitute a Peptidase M12B domain. Glu4 contributes to the Ca(2+) binding site.

This sequence belongs to the venom metalloproteinase (M12B) family. P-I subfamily. As to quaternary structure, monomer. It depends on Zn(2+) as a cofactor. As to expression, expressed by the venom gland.

The protein localises to the secreted. Its activity is regulated as follows. Completely inhibited by EDTA and EGTA. Partially inhibited by serine proteinase inhibitors PMSF and benzamidine. Not inhibited by cysteine proteinase inhibitors mercury ions and E-64. Is active without cofactors, although the presence of low concentrations of calcium and zinc ions enhanced its ability to convert prothrombin (F2) into active thrombin. In terms of biological role, prothrombin (F2) activator that is cofactor-independent. Also has fibrinolytic and fibrinogenolytic activity. It degrades the Aalpha-chain and more slowly the Bbeta-chain of fibrin and fibrinogen, while the gamma-chain is only partially and slowly affected. A dose-dependent procoagulant activity is shown in human plasma. The polypeptide is Snake venom metalloproteinase bothrojaractivase (Bothrops jararaca (Jararaca)).